The following is a 311-amino-acid chain: MQRIGMVANLEKPRVRETALDIINYLESRNVRVLISTRKAAALGCPEKGVAEEEVIAAEGLLALGGDGTLLRAARLVAPAGTPILGINLGHLGFLTEIELTELYPALDKLLAGAYRIEERMMLRGTVQRPEKALTCTALNDIVVTKGAFSRMLRLEVYIDTAYLDTYPADGLIVSSPTGSTAYSLSAGGPLVSPQLQVMILTPICPHTLYTRPLVVPGEQEIRVCVHAPGAEVMLTVDGQQGLHLRDGDVIRVTRARTPARLIRLQDNTFYSLVREKLKEGGSRQDDENPAATVNPETDSKYPHSHPGSTG.

Aspartate 67 serves as the catalytic Proton acceptor. NAD(+) contacts are provided by residues 67–68 (DG), arginine 72, 140–141 (ND), arginine 151, aspartate 170, 181–186 (TAYSLS), and glutamine 240. Positions 278–287 (LKEGGSRQDD) are enriched in basic and acidic residues. The interval 278-311 (LKEGGSRQDDENPAATVNPETDSKYPHSHPGSTG) is disordered.

The protein belongs to the NAD kinase family. A divalent metal cation serves as cofactor.

It is found in the cytoplasm. The enzyme catalyses NAD(+) + ATP = ADP + NADP(+) + H(+). Its function is as follows. Involved in the regulation of the intracellular balance of NAD and NADP, and is a key enzyme in the biosynthesis of NADP. Catalyzes specifically the phosphorylation on 2'-hydroxyl of the adenosine moiety of NAD to yield NADP. This is NAD kinase from Moorella thermoacetica (strain ATCC 39073 / JCM 9320).